A 90-amino-acid chain; its full sequence is Small ribosomal subunit protein uS15c (90 aa).

This sequence belongs to the universal ribosomal protein uS15 family. In terms of assembly, part of the 30S ribosomal subunit.

Its subcellular location is the plastid. The protein resides in the chloroplast. The polypeptide is Small ribosomal subunit protein uS15c (rps15-A) (Pelargonium hortorum (Common geranium)).